The following is a 486-amino-acid chain: N-succinylglutamate 5-semialdehyde dehydrogenase (486 aa).

Residue G220 to G225 participates in NAD(+) binding. Residues E243 and C277 contribute to the active site.

This sequence belongs to the aldehyde dehydrogenase family. AstD subfamily.

It carries out the reaction N-succinyl-L-glutamate 5-semialdehyde + NAD(+) + H2O = N-succinyl-L-glutamate + NADH + 2 H(+). The protein operates within amino-acid degradation; L-arginine degradation via AST pathway; L-glutamate and succinate from L-arginine: step 4/5. Catalyzes the NAD-dependent reduction of succinylglutamate semialdehyde into succinylglutamate. This Shewanella sp. (strain W3-18-1) protein is N-succinylglutamate 5-semialdehyde dehydrogenase.